Reading from the N-terminus, the 564-residue chain is Major facilitator superfamily transporter MPN_076 (564 aa).

The next 12 membrane-spanning stretches (helical) occupy residues 1–21 (MLWA…FVID), 65–85 (ITLL…KFGY), 89–109 (VMIM…GDPL), 176–196 (IAGY…GTTL), 220–240 (NLWG…FQSV), 249–269 (VFIL…FAWF), 306–326 (MIGM…GGWW), 358–378 (AGLP…YMVF), 404–424 (IVIV…FAFV), 425–445 (AIAT…ILIL), 457–477 (VSVL…AFDI), and 501–521 (GAIA…AIVV).

It belongs to the major facilitator superfamily.

The protein localises to the cell membrane. This is Major facilitator superfamily transporter MPN_076 from Mycoplasma pneumoniae (strain ATCC 29342 / M129 / Subtype 1) (Mycoplasmoides pneumoniae).